The chain runs to 236 residues: Small ribosomal subunit protein uS2c (236 aa).

It belongs to the universal ribosomal protein uS2 family.

It is found in the plastid. Its subcellular location is the chloroplast. In Morus indica (Mulberry), this protein is Small ribosomal subunit protein uS2c (rps2).